The primary structure comprises 334 residues: O(6)-methylguanine-induced apoptosis 2 (334 aa).

Residues 1 to 60 (MDNSAQKNERTGKHPRRASEVQKGFTAAYPTQSSIPFKSQASVIPESEKKGFNSQAKRFP) form a disordered region. Residues 7–20 (KNERTGKHPRRASE) show a composition bias toward basic and acidic residues. Residues 29 to 42 (YPTQSSIPFKSQAS) are compositionally biased toward polar residues. STPGR repeat units lie at residues 67–74 (PGPGFYNV), 109–117 (PAANAYTIP), 148–155 (PAPNYYNA), 187–206 (GPPPGHYDINESLVKQSPNT), 225–257 (GPGPGYYNPSDCTKVPKKTLFPKNPILNFSAQP), 267–282 (PGPGQYEIVDYLGPRK), and 306–316 (LPGPATYKPEL). Y72 bears the Phosphotyrosine mark.

The protein belongs to the STPG1 family.

The protein localises to the cytoplasm. It is found in the nucleus. May positively contribute to the induction of apoptosis triggered by O(6)-methylguanine. This Homo sapiens (Human) protein is O(6)-methylguanine-induced apoptosis 2 (STPG1).